Here is a 66-residue protein sequence, read N- to C-terminus: Large ribosomal subunit protein uL29c (66 aa).

It belongs to the universal ribosomal protein uL29 family.

It is found in the plastid. The protein resides in the chloroplast. The protein is Large ribosomal subunit protein uL29c of Gracilaria tenuistipitata var. liui (Red alga).